The sequence spans 211 residues: ATP-dependent Clp protease proteolytic subunit (211 aa).

S106 serves as the catalytic Nucleophile. The active site involves H131.

The protein belongs to the peptidase S14 family. Fourteen ClpP subunits assemble into 2 heptameric rings which stack back to back to give a disk-like structure with a central cavity, resembling the structure of eukaryotic proteasomes.

It localises to the cytoplasm. It carries out the reaction Hydrolysis of proteins to small peptides in the presence of ATP and magnesium. alpha-casein is the usual test substrate. In the absence of ATP, only oligopeptides shorter than five residues are hydrolyzed (such as succinyl-Leu-Tyr-|-NHMec, and Leu-Tyr-Leu-|-Tyr-Trp, in which cleavage of the -Tyr-|-Leu- and -Tyr-|-Trp bonds also occurs).. Functionally, cleaves peptides in various proteins in a process that requires ATP hydrolysis. Has a chymotrypsin-like activity. Plays a major role in the degradation of misfolded proteins. The sequence is that of ATP-dependent Clp protease proteolytic subunit from Maricaulis maris (strain MCS10) (Caulobacter maris).